Reading from the N-terminus, the 223-residue chain is Urease accessory protein UreF (223 aa).

Belongs to the UreF family. As to quaternary structure, ureD, UreF and UreG form a complex that acts as a GTP-hydrolysis-dependent molecular chaperone, activating the urease apoprotein by helping to assemble the nickel containing metallocenter of UreC. The UreE protein probably delivers the nickel.

The protein resides in the cytoplasm. Required for maturation of urease via the functional incorporation of the urease nickel metallocenter. This is Urease accessory protein UreF from Rhizobium meliloti (strain 1021) (Ensifer meliloti).